A 255-amino-acid polypeptide reads, in one-letter code: 1-(5-phosphoribosyl)-5-[(5-phosphoribosylamino)methylideneamino] imidazole-4-carboxamide isomerase (255 aa).

The active-site Proton acceptor is the Asp-8. Asp-129 (proton donor) is an active-site residue.

It belongs to the HisA/HisF family.

It is found in the cytoplasm. It catalyses the reaction 1-(5-phospho-beta-D-ribosyl)-5-[(5-phospho-beta-D-ribosylamino)methylideneamino]imidazole-4-carboxamide = 5-[(5-phospho-1-deoxy-D-ribulos-1-ylimino)methylamino]-1-(5-phospho-beta-D-ribosyl)imidazole-4-carboxamide. The protein operates within amino-acid biosynthesis; L-histidine biosynthesis; L-histidine from 5-phospho-alpha-D-ribose 1-diphosphate: step 4/9. The polypeptide is 1-(5-phosphoribosyl)-5-[(5-phosphoribosylamino)methylideneamino] imidazole-4-carboxamide isomerase (Gloeobacter violaceus (strain ATCC 29082 / PCC 7421)).